The chain runs to 328 residues: PhoH-like protein (328 aa).

Residue 135–142 (GPAGTGKT) participates in ATP binding.

This sequence belongs to the PhoH family.

The protein resides in the cytoplasm. The sequence is that of PhoH-like protein from Synechocystis sp. (strain ATCC 27184 / PCC 6803 / Kazusa).